The sequence spans 87 residues: DNA-directed RNA polymerase subunit omega (87 aa).

This sequence belongs to the RNA polymerase subunit omega family. As to quaternary structure, the RNAP catalytic core consists of 2 alpha, 1 beta, 1 beta' and 1 omega subunit. When a sigma factor is associated with the core the holoenzyme is formed, which can initiate transcription.

It carries out the reaction RNA(n) + a ribonucleoside 5'-triphosphate = RNA(n+1) + diphosphate. Promotes RNA polymerase assembly. Latches the N- and C-terminal regions of the beta' subunit thereby facilitating its interaction with the beta and alpha subunits. The protein is DNA-directed RNA polymerase subunit omega of Pseudomonas putida (strain ATCC 700007 / DSM 6899 / JCM 31910 / BCRC 17059 / LMG 24140 / F1).